The sequence spans 293 residues: DNA-directed RNA polymerase III subunit RPC6 (293 aa).

This sequence belongs to the eukaryotic RPC34/RPC39 RNA polymerase subunit family. As to quaternary structure, component of the RNA polymerase III (Pol III) complex consisting of 17 subunits.

It is found in the nucleus. Functionally, DNA-dependent RNA polymerase catalyzes the transcription of DNA into RNA using the four ribonucleoside triphosphates as substrates. Specific peripheric component of RNA polymerase III which synthesizes small RNAs, such as 5S rRNA and tRNAs. This is DNA-directed RNA polymerase III subunit RPC6 from Drosophila melanogaster (Fruit fly).